A 189-amino-acid chain; its full sequence is Peptidyl-tRNA hydrolase (189 aa).

Tyr-15 lines the tRNA pocket. His-20 (proton acceptor) is an active-site residue. 3 residues coordinate tRNA: Phe-66, Asn-68, and Asn-114.

This sequence belongs to the PTH family. In terms of assembly, monomer.

It is found in the cytoplasm. It catalyses the reaction an N-acyl-L-alpha-aminoacyl-tRNA + H2O = an N-acyl-L-amino acid + a tRNA + H(+). Hydrolyzes ribosome-free peptidyl-tRNAs (with 1 or more amino acids incorporated), which drop off the ribosome during protein synthesis, or as a result of ribosome stalling. Its function is as follows. Catalyzes the release of premature peptidyl moieties from peptidyl-tRNA molecules trapped in stalled 50S ribosomal subunits, and thus maintains levels of free tRNAs and 50S ribosomes. The sequence is that of Peptidyl-tRNA hydrolase from Streptococcus pyogenes serotype M3 (strain ATCC BAA-595 / MGAS315).